The primary structure comprises 215 residues: dITP/XTP pyrophosphatase (215 aa).

13 to 18 provides a ligand contact to substrate; it reads THNTGK. Asp74 serves as the catalytic Proton acceptor. Position 74 (Asp74) interacts with Mg(2+). Residues Ser75, 163–166, Lys186, and 199–200 each bind substrate; these read FGFD and HR.

This sequence belongs to the HAM1 NTPase family. In terms of assembly, homodimer. Mg(2+) is required as a cofactor.

It catalyses the reaction XTP + H2O = XMP + diphosphate + H(+). The catalysed reaction is dITP + H2O = dIMP + diphosphate + H(+). It carries out the reaction ITP + H2O = IMP + diphosphate + H(+). Its function is as follows. Pyrophosphatase that catalyzes the hydrolysis of nucleoside triphosphates to their monophosphate derivatives, with a high preference for the non-canonical purine nucleotides XTP (xanthosine triphosphate), dITP (deoxyinosine triphosphate) and ITP. Seems to function as a house-cleaning enzyme that removes non-canonical purine nucleotides from the nucleotide pool, thus preventing their incorporation into DNA/RNA and avoiding chromosomal lesions. This chain is dITP/XTP pyrophosphatase, found in Bartonella quintana (strain Toulouse) (Rochalimaea quintana).